The chain runs to 266 residues: UPF0354 protein lmo1608 (266 aa).

It belongs to the UPF0354 family.

This is UPF0354 protein lmo1608 from Listeria monocytogenes serovar 1/2a (strain ATCC BAA-679 / EGD-e).